A 248-amino-acid chain; its full sequence is Cell division protein ZapD (248 aa).

The protein belongs to the ZapD family. As to quaternary structure, interacts with FtsZ.

Its subcellular location is the cytoplasm. Cell division factor that enhances FtsZ-ring assembly. Directly interacts with FtsZ and promotes bundling of FtsZ protofilaments, with a reduction in FtsZ GTPase activity. The protein is Cell division protein ZapD of Aliivibrio fischeri (strain ATCC 700601 / ES114) (Vibrio fischeri).